Consider the following 218-residue polypeptide: Outer-membrane lipoprotein LolB (218 aa).

The first 20 residues, 1–20, serve as a signal peptide directing secretion; it reads MSQVIRTLALTGLALAGLSG. Cysteine 21 is lipidated: N-palmitoyl cysteine. Cysteine 21 carries S-diacylglycerol cysteine lipidation.

It belongs to the LolB family. In terms of assembly, monomer.

It is found in the cell outer membrane. In terms of biological role, plays a critical role in the incorporation of lipoproteins in the outer membrane after they are released by the LolA protein. This is Outer-membrane lipoprotein LolB from Xanthomonas campestris pv. campestris (strain 8004).